Here is a 157-residue protein sequence, read N- to C-terminus: Crossover junction endodeoxyribonuclease RuvC (157 aa).

Residues Asp7, Glu67, and Asp140 contribute to the active site. Mg(2+)-binding residues include Asp7, Glu67, and Asp140.

This sequence belongs to the RuvC family. In terms of assembly, homodimer which binds Holliday junction (HJ) DNA. The HJ becomes 2-fold symmetrical on binding to RuvC with unstacked arms; it has a different conformation from HJ DNA in complex with RuvA. In the full resolvosome a probable DNA-RuvA(4)-RuvB(12)-RuvC(2) complex forms which resolves the HJ. It depends on Mg(2+) as a cofactor.

The protein localises to the cytoplasm. The enzyme catalyses Endonucleolytic cleavage at a junction such as a reciprocal single-stranded crossover between two homologous DNA duplexes (Holliday junction).. Its function is as follows. The RuvA-RuvB-RuvC complex processes Holliday junction (HJ) DNA during genetic recombination and DNA repair. Endonuclease that resolves HJ intermediates. Cleaves cruciform DNA by making single-stranded nicks across the HJ at symmetrical positions within the homologous arms, yielding a 5'-phosphate and a 3'-hydroxyl group; requires a central core of homology in the junction. The consensus cleavage sequence is 5'-(A/T)TT(C/G)-3'. Cleavage occurs on the 3'-side of the TT dinucleotide at the point of strand exchange. HJ branch migration catalyzed by RuvA-RuvB allows RuvC to scan DNA until it finds its consensus sequence, where it cleaves and resolves the cruciform DNA. This Rickettsia massiliae (strain Mtu5) protein is Crossover junction endodeoxyribonuclease RuvC.